The following is an 80-amino-acid chain: Putative membrane protein insertion efficiency factor (80 aa).

The segment at 61–80 (KTGKDPVPDHFSLKRNQEGE) is disordered. Over residues 62–80 (TGKDPVPDHFSLKRNQEGE) the composition is skewed to basic and acidic residues.

It belongs to the UPF0161 family.

The protein localises to the cell membrane. Could be involved in insertion of integral membrane proteins into the membrane. This is Putative membrane protein insertion efficiency factor from Streptococcus pneumoniae serotype 19F (strain G54).